The sequence spans 516 residues: MNVFFMFSLLFLAALGSCADDRNPLEECFRETDYEEFLEIAKNGLTATSNPKRVVIVGAGMSGLSAAYVLAGAGHQVTVLEASERVGGRVRTYRKEDWYANLGPMRLPTKHRIVREYIKKFGLELNEFFQENDNAWYFIKNIRKRVQEVKNNPGLLKYPVKPSETGKSAGQLYEESLRKVVEELRSTNCKYILDKYDTYSTKEYLLKEGNLSPGAVDMIGDLLNEDSGYYVSFIESLKHDDIFGYEKRFDEIVGGMDQLPTSMYEAIKEKVQVHFNARVIEIQQNDREATVTYQTSANEMSSVTADYVIVCTTSRAARRIKFEPPLPPKKAHALRSVHYRSGTKIFLTCTKKFWEDEGIHGGKSTTDLPSRSIYYPNHNFTSGVGVIIAYGIGDDANFFQALDFKDCADIVINDLSLIHQLPKEDIQTFCHPSKIQRWSLDRYAMGGITTFTPYQFQHFSEALTAPFNRIYFAGEYTAQFHGWIDSTIKSGLTAARDVNRASENPSGIHLSNDNEF.

Positions 1 to 18 (MNVFFMFSLLFLAALGSC) are cleaved as a signal peptide. Cys-28 and Cys-189 are joined by a disulfide. Residues 61 to 62 (MS), 81 to 82 (EA), Arg-89, and 103 to 106 (GPMR) each bind FAD. Arg-106 and His-239 together coordinate substrate. Val-279 is an FAD binding site. Cys-349 and Cys-430 are oxidised to a cystine. Asn-379 carries an N-linked (GlcNAc...) asparagine glycan. Tyr-390 serves as a coordination point for substrate. Residues Glu-475 and 482–487 (GWIDST) contribute to the FAD site. Substrate is bound at residue 482–483 (GW).

This sequence belongs to the flavin monoamine oxidase family. FIG1 subfamily. In terms of assembly, homodimer; non-covalently linked. FAD is required as a cofactor. N-glycosylated. As to expression, expressed by the venom gland.

It is found in the secreted. It carries out the reaction an L-alpha-amino acid + O2 + H2O = a 2-oxocarboxylate + H2O2 + NH4(+). Catalyzes an oxidative deamination of predominantly hydrophobic and aromatic L-amino acids, thus producing hydrogen peroxide that may contribute to the diverse toxic effects of this enzyme. Exhibits diverse biological activities, such as hemorrhage, hemolysis, edema, apoptosis of vascular endothelial cells or tumor cell lines, antibacterial and antiparasitic activities, as well as regulation of platelet aggregation. Effects of snake L-amino oxidases on platelets are controversial, since they either induce aggregation or inhibit agonist-induced aggregation. These different effects are probably due to different experimental conditions. This is L-amino-acid oxidase from Sistrurus catenatus edwardsii (Desert massasauga).